A 447-amino-acid chain; its full sequence is Tubulin beta chain (447 aa).

Residues Gln-11, Glu-69, Ser-138, Gly-142, Thr-143, Gly-144, Asn-204, and Asn-226 each contribute to the GTP site. A Mg(2+)-binding site is contributed by Glu-69. Residues 425–447 (YQDASISEGEEEYEEEVPIEGEE) are disordered. Residues 432–447 (EGEEEYEEEVPIEGEE) show a composition bias toward acidic residues.

Belongs to the tubulin family. As to quaternary structure, dimer of alpha and beta chains. A typical microtubule is a hollow water-filled tube with an outer diameter of 25 nm and an inner diameter of 15 nM. Alpha-beta heterodimers associate head-to-tail to form protofilaments running lengthwise along the microtubule wall with the beta-tubulin subunit facing the microtubule plus end conferring a structural polarity. Microtubules usually have 13 protofilaments but different protofilament numbers can be found in some organisms and specialized cells. Mg(2+) is required as a cofactor.

The protein resides in the cytoplasm. The protein localises to the cytoskeleton. Functionally, tubulin is the major constituent of microtubules, a cylinder consisting of laterally associated linear protofilaments composed of alpha- and beta-tubulin heterodimers. Microtubules grow by the addition of GTP-tubulin dimers to the microtubule end, where a stabilizing cap forms. Below the cap, tubulin dimers are in GDP-bound state, owing to GTPase activity of alpha-tubulin. The chain is Tubulin beta chain (tubA) from Botryotinia fuckeliana (Noble rot fungus).